We begin with the raw amino-acid sequence, 308 residues long: Low density lipoprotein receptor adapter protein 1 (308 aa).

N-acetylmethionine is present on Met-1. Phosphoserine is present on residues Ser-14, Ser-186, and Ser-202. The PID domain occupies 42 to 196; that stretch reads LLEGMLFSLK…QEGGDVLGAR (155 aa). Residues 212 to 216 carry the Clathrin box motif; that stretch reads LLDLE. The AP-2 complex binding stretch occupies residues 249–276; sequence WELDDGLDEAFSRLAQSRTNPQVLDTGL. A [DE]-X(1,2)-F-X-X-[FL]-X-X-X-R motif motif is present at residues 257–266; that stretch reads EAFSRLAQSR.

Interacts (via PID domain) with LDLR (via NPXY motif). Binds to soluble clathrin trimers. Interacts with AP2B1; the interaction mediates the association with the AP-2 complex. Interacts with VLDLR. Interacts with LRP2. As to expression, expressed at high levels in the kidney, liver, and placenta, with lower levels detectable in brain, heart, muscle, colon, spleen, intestine, lung, and leukocytes.

The protein resides in the cytoplasm. Its function is as follows. Adapter protein (clathrin-associated sorting protein (CLASP)) required for efficient endocytosis of the LDL receptor (LDLR) in polarized cells such as hepatocytes and lymphocytes, but not in non-polarized cells (fibroblasts). May be required for LDL binding and internalization but not for receptor clustering in coated pits. May facilitate the endocytosis of LDLR and LDLR-LDL complexes from coated pits by stabilizing the interaction between the receptor and the structural components of the pits. May also be involved in the internalization of other LDLR family members. Binds to phosphoinositides, which regulate clathrin bud assembly at the cell surface. Required for trafficking of LRP2 to the endocytic recycling compartment which is necessary for LRP2 proteolysis, releasing a tail fragment which translocates to the nucleus and mediates transcriptional repression. The protein is Low density lipoprotein receptor adapter protein 1 of Homo sapiens (Human).